The following is a 471-amino-acid chain: Mitochondrial distribution and morphology protein 10 (471 aa).

Positions P429 to S455 are disordered. Residues A444–S455 are compositionally biased toward gly residues.

The protein belongs to the MDM10 family. As to quaternary structure, component of the ER-mitochondria encounter structure (ERMES) or MDM complex, composed of mmm1, mdm10, mdm12 and mdm34. Associates with the mitochondrial outer membrane sorting assembly machinery SAM(core) complex.

It is found in the mitochondrion outer membrane. Its function is as follows. Component of the ERMES/MDM complex, which serves as a molecular tether to connect the endoplasmic reticulum and mitochondria. Components of this complex are involved in the control of mitochondrial shape and protein biogenesis and may function in phospholipid exchange. mdm10 is involved in the late assembly steps of the general translocase of the mitochondrial outer membrane (TOM complex). Functions in the tom40-specific route of the assembly of outer membrane beta-barrel proteins, including the association of tom40 with the receptor tom22 and small TOM proteins. Can associate with the SAM(core) complex as well as the mdm12-mmm1 complex, both involved in late steps of the major beta-barrel assembly pathway, that is responsible for biogenesis of all outer membrane beta-barrel proteins. May act as a switch that shuttles between both complexes and channels precursor proteins into the tom40-specific pathway. Plays a role in mitochondrial morphology and in the inheritance of mitochondria. This is Mitochondrial distribution and morphology protein 10 (mdmB) from Aspergillus fumigatus (strain ATCC MYA-4609 / CBS 101355 / FGSC A1100 / Af293) (Neosartorya fumigata).